The following is a 269-amino-acid chain: WW domain-binding protein 1 (269 aa).

Short sequence motifs (PPxY motif) lie at residues 124–127 (PPAY) and 137–141 (PPPPY). Disordered stretches follow at residues 169-203 (EGTN…PPSC) and 249-269 (PPES…GDIP). Polar residues predominate over residues 174-183 (EGVSSHQSAP).

Interacts with NEDD4. Binds to the WW domain of YAP1, WWP1 and WWP2. Interacts with WWOX. Expressed in most tissues but at significantly lower levels in placenta, lung, liver, and kidney.

The sequence is that of WW domain-binding protein 1 (WBP1) from Homo sapiens (Human).